Reading from the N-terminus, the 121-residue chain is Large ribosomal subunit protein uL18 (121 aa).

It belongs to the universal ribosomal protein uL18 family. Part of the 50S ribosomal subunit; part of the 5S rRNA/L5/L18/L25 subcomplex. Contacts the 5S and 23S rRNAs.

Functionally, this is one of the proteins that bind and probably mediate the attachment of the 5S RNA into the large ribosomal subunit, where it forms part of the central protuberance. The chain is Large ribosomal subunit protein uL18 from Delftia acidovorans (strain DSM 14801 / SPH-1).